An 833-amino-acid polypeptide reads, in one-letter code: Glycerol-3-phosphate acyltransferase (833 aa).

An HXXXXD motif motif is present at residues 309–314; the sequence is CHRSHI.

Belongs to the GPAT/DAPAT family.

It localises to the cell inner membrane. It carries out the reaction sn-glycerol 3-phosphate + an acyl-CoA = a 1-acyl-sn-glycero-3-phosphate + CoA. The protein operates within phospholipid metabolism; CDP-diacylglycerol biosynthesis; CDP-diacylglycerol from sn-glycerol 3-phosphate: step 1/3. The protein is Glycerol-3-phosphate acyltransferase of Pseudomonas syringae pv. syringae (strain B728a).